A 507-amino-acid chain; its full sequence is Dihydrolipoyllysine-residue acetyltransferase component of pyruvate dehydrogenase complex, mitochondrial (507 aa).

In terms of domain architecture, Lipoyl-binding spans 77-153 (HNRVALPALS…PIGKLLCIIV (77 aa)). An N6-lipoyllysine modification is found at K118. 2 disordered regions span residues 168 to 223 (DGAS…VSAS) and 248 to 270 (RILA…TQAV). Residues 221–258 (SASPFAKKLAAENGLDLSGVSGSGPGGRILASDLSQAP) enclose the Peripheral subunit-binding (PSBD) domain. Catalysis depends on residues H480 and D484.

The protein belongs to the 2-oxoacid dehydrogenase family. Requires (R)-lipoate as cofactor.

It localises to the mitochondrion matrix. It carries out the reaction N(6)-[(R)-dihydrolipoyl]-L-lysyl-[protein] + acetyl-CoA = N(6)-[(R)-S(8)-acetyldihydrolipoyl]-L-lysyl-[protein] + CoA. Its function is as follows. The pyruvate dehydrogenase complex catalyzes the overall conversion of pyruvate to acetyl-CoA and CO(2). It contains multiple copies of three enzymatic components: pyruvate dehydrogenase (E1), dihydrolipoamide acetyltransferase (E2) and lipoamide dehydrogenase (E3). The polypeptide is Dihydrolipoyllysine-residue acetyltransferase component of pyruvate dehydrogenase complex, mitochondrial (Caenorhabditis elegans).